The primary structure comprises 159 residues: Probable GPI-anchored protein ANS1 (159 aa).

The N-terminal stretch at 1 to 20 is a signal peptide; it reads MKCTLVSTLFAITNILVAHA. The stretch at 101 to 114 is one PIR1/2/3 repeat; sequence AAISQISDGQIQAT. Residue G137 is the site of GPI-anchor amidated glycine attachment. Positions 138 to 159 are cleaved as a propeptide — removed in mature form; the sequence is AGMKVESKNMGYIVGVAALLFL.

The protein localises to the cell membrane. The protein is Probable GPI-anchored protein ANS1 (ANS1) of Saccharomyces cerevisiae (strain ATCC 204508 / S288c) (Baker's yeast).